The primary structure comprises 274 residues: tRNA-cytidine(32) 2-sulfurtransferase (274 aa).

Residues 40–45 (SGGKDS) carry the PP-loop motif motif. [4Fe-4S] cluster-binding residues include Cys115, Cys118, and Cys206.

It belongs to the TtcA family. In terms of assembly, homodimer. Mg(2+) is required as a cofactor. Requires [4Fe-4S] cluster as cofactor.

Its subcellular location is the cytoplasm. It catalyses the reaction cytidine(32) in tRNA + S-sulfanyl-L-cysteinyl-[cysteine desulfurase] + AH2 + ATP = 2-thiocytidine(32) in tRNA + L-cysteinyl-[cysteine desulfurase] + A + AMP + diphosphate + H(+). It functions in the pathway tRNA modification. Functionally, catalyzes the ATP-dependent 2-thiolation of cytidine in position 32 of tRNA, to form 2-thiocytidine (s(2)C32). The sulfur atoms are provided by the cysteine/cysteine desulfurase (IscS) system. In Azotobacter vinelandii (strain DJ / ATCC BAA-1303), this protein is tRNA-cytidine(32) 2-sulfurtransferase.